The chain runs to 309 residues: NAD kinase (309 aa).

Asp-89 (proton acceptor) is an active-site residue. Residues 89–90 (DG), 163–164 (NE), His-174, Arg-191, Asp-193, and 204–209 (TAYSLS) each bind NAD(+).

This sequence belongs to the NAD kinase family. It depends on a divalent metal cation as a cofactor.

It is found in the cytoplasm. The enzyme catalyses NAD(+) + ATP = ADP + NADP(+) + H(+). Involved in the regulation of the intracellular balance of NAD and NADP, and is a key enzyme in the biosynthesis of NADP. Catalyzes specifically the phosphorylation on 2'-hydroxyl of the adenosine moiety of NAD to yield NADP. This Shewanella frigidimarina (strain NCIMB 400) protein is NAD kinase.